The following is a 200-amino-acid chain: NADH-quinone oxidoreductase subunit C (200 aa).

It belongs to the complex I 30 kDa subunit family. As to quaternary structure, NDH-1 is composed of 14 different subunits. Subunits NuoB, C, D, E, F, and G constitute the peripheral sector of the complex.

It localises to the cell inner membrane. The enzyme catalyses a quinone + NADH + 5 H(+)(in) = a quinol + NAD(+) + 4 H(+)(out). NDH-1 shuttles electrons from NADH, via FMN and iron-sulfur (Fe-S) centers, to quinones in the respiratory chain. The immediate electron acceptor for the enzyme in this species is believed to be ubiquinone. Couples the redox reaction to proton translocation (for every two electrons transferred, four hydrogen ions are translocated across the cytoplasmic membrane), and thus conserves the redox energy in a proton gradient. In Burkholderia thailandensis (strain ATCC 700388 / DSM 13276 / CCUG 48851 / CIP 106301 / E264), this protein is NADH-quinone oxidoreductase subunit C.